The following is a 282-amino-acid chain: Phosphatidylglycerol--prolipoprotein diacylglyceryl transferase (282 aa).

3 helical membrane-spanning segments follow: residues 18–38 (IQVH…VALA), 56–76 (ILWA…IFQW), and 89–109 (IWDG…VVIL). Residue arginine 137 coordinates a 1,2-diacyl-sn-glycero-3-phospho-(1'-sn-glycerol). Residues 237–257 (VIRVSQALSVVLFFGSIGLMI) traverse the membrane as a helical segment.

This sequence belongs to the Lgt family.

Its subcellular location is the cell membrane. The catalysed reaction is L-cysteinyl-[prolipoprotein] + a 1,2-diacyl-sn-glycero-3-phospho-(1'-sn-glycerol) = an S-1,2-diacyl-sn-glyceryl-L-cysteinyl-[prolipoprotein] + sn-glycerol 1-phosphate + H(+). The protein operates within protein modification; lipoprotein biosynthesis (diacylglyceryl transfer). Its function is as follows. Catalyzes the transfer of the diacylglyceryl group from phosphatidylglycerol to the sulfhydryl group of the N-terminal cysteine of a prolipoprotein, the first step in the formation of mature lipoproteins. This chain is Phosphatidylglycerol--prolipoprotein diacylglyceryl transferase, found in Lactiplantibacillus plantarum (strain ATCC BAA-793 / NCIMB 8826 / WCFS1) (Lactobacillus plantarum).